The sequence spans 537 residues: Cytoplasmic 60S subunit biogenesis factor REI1 homolog (537 aa).

2 C2H2-type zinc fingers span residues 18–42 (YTCN…SDWH) and 83–107 (KTCE…STKH). Disordered regions lie at residues 101–151 (HLSS…AEEE) and 163–204 (SIHD…PEAL). The span at 192–204 (EETPTTTPKPEAL) shows a compositional bias: low complexity. The C2H2-type 3 zinc finger occupies 260–284 (NECLTCGKMKVNVFAIQTHMRDKSH). Residues 312–322 (DWETEEEDKGE) show a composition bias toward acidic residues. 2 disordered regions span residues 312 to 361 (DWET…ASSL) and 382 to 401 (GKHP…ADGI). A compositionally biased stretch (basic and acidic residues) spans 323 to 339 (EDGGVRLGAKRESKVVD). Acidic residues predominate over residues 340 to 356 (ENGDEVMEDEEGWETDS). Residues 383 to 395 (KHPHHSRENKKAH) show a composition bias toward basic residues.

The protein belongs to the REI1 family. In terms of assembly, associates with nascent pre-60S particles that have not yet entered the translating pool, and is released from mature 60S subunits.

The protein resides in the cytoplasm. In terms of biological role, pre-60S-associated factor involved in the cytoplasmic maturation of the 60S subunit. Involved in the dissociation and recycling of other late pre-60S factors before newly synthesized large ribosomal subunits enter translation. This chain is Cytoplasmic 60S subunit biogenesis factor REI1 homolog, found in Chaetomium thermophilum (strain DSM 1495 / CBS 144.50 / IMI 039719) (Thermochaetoides thermophila).